We begin with the raw amino-acid sequence, 232 residues long: 7-cyano-7-deazaguanine synthase (232 aa).

Residue 11-21 (ASGGMDSATAA) coordinates ATP. Residues C192, C200, C203, and C206 each coordinate Zn(2+).

Belongs to the QueC family. Zn(2+) serves as cofactor.

The catalysed reaction is 7-carboxy-7-deazaguanine + NH4(+) + ATP = 7-cyano-7-deazaguanine + ADP + phosphate + H2O + H(+). The protein operates within purine metabolism; 7-cyano-7-deazaguanine biosynthesis. Functionally, catalyzes the ATP-dependent conversion of 7-carboxy-7-deazaguanine (CDG) to 7-cyano-7-deazaguanine (preQ(0)). The protein is 7-cyano-7-deazaguanine synthase of Haloarcula marismortui (strain ATCC 43049 / DSM 3752 / JCM 8966 / VKM B-1809) (Halobacterium marismortui).